A 158-amino-acid chain; its full sequence is MRLVVQRVREASVAVDGQAVASIEAGLLVLVGFGAADGSDFAAGKPCRATLEKLLDLRIFPDEAGKLNLSLRETGGGLLLVSQFTLYASCRKGRRPSFSEAAPPQVALGLYNALVEMAGQALPGRVGSGVFGADMDVSLVNWGPVTILLDSADLGGAT.

Residues 143–144 carry the Gly-cisPro motif, important for rejection of L-amino acids motif; sequence GP.

It belongs to the DTD family. Homodimer.

Its subcellular location is the cytoplasm. It carries out the reaction glycyl-tRNA(Ala) + H2O = tRNA(Ala) + glycine + H(+). It catalyses the reaction a D-aminoacyl-tRNA + H2O = a tRNA + a D-alpha-amino acid + H(+). Functionally, an aminoacyl-tRNA editing enzyme that deacylates mischarged D-aminoacyl-tRNAs. Also deacylates mischarged glycyl-tRNA(Ala), protecting cells against glycine mischarging by AlaRS. Acts via tRNA-based rather than protein-based catalysis; rejects L-amino acids rather than detecting D-amino acids in the active site. By recycling D-aminoacyl-tRNA to D-amino acids and free tRNA molecules, this enzyme counteracts the toxicity associated with the formation of D-aminoacyl-tRNA entities in vivo and helps enforce protein L-homochirality. This is D-aminoacyl-tRNA deacylase from Solidesulfovibrio magneticus (strain ATCC 700980 / DSM 13731 / RS-1) (Desulfovibrio magneticus).